The sequence spans 119 residues: Fluoride-specific ion channel FluC 1 (119 aa).

Transmembrane regions (helical) follow at residues 2–22, 37–57, 62–82, and 99–119; these read TGAV…GAVL, AGTL…TFAA, TMLL…SFSV, and HALG…LLVA. Residues G72 and T75 each contribute to the Na(+) site.

This sequence belongs to the fluoride channel Fluc/FEX (TC 1.A.43) family.

The protein resides in the cell membrane. The catalysed reaction is fluoride(in) = fluoride(out). With respect to regulation, na(+) is not transported, but it plays an essential structural role and its presence is essential for fluoride channel function. Functionally, fluoride-specific ion channel. Important for reducing fluoride concentration in the cell, thus reducing its toxicity. The protein is Fluoride-specific ion channel FluC 1 of Halobacterium salinarum (strain ATCC 700922 / JCM 11081 / NRC-1) (Halobacterium halobium).